The sequence spans 331 residues: MNSVLITGAGYRIRKRGDVLTIETGKDSDTAEPPRTLSPLGLDLLAIAGDHSISTAAVRLVTSHGGAIALMDGLGNPFGHFLPLGRSALIEQYEAQASAPEERRLEIARSICTGALENKRTLLSNLERIRGFDLSREIRLVEDAQDKALECQSLDSLRGVEGSGAHAYFQGFSLAFDEEWGFLGRSQNPATDPVNSLLSYGYGMLYIQARQALVLSGYSPYYGAYHETYKKQEALVYDLVEEFRQPVVDRTVVTFLAKHMATPDDFTYPDEGGCMIGTMAKKKYAAAVLTRIHGKVKYEEQTFQDIFKRQAERIGKALTEGDEYVPYRYRT.

Positions 161, 226, and 241 each coordinate Mn(2+).

It belongs to the CRISPR-associated endonuclease Cas1 family. In terms of assembly, homodimer, forms a heterotetramer with a Cas2 homodimer. Mg(2+) serves as cofactor. Requires Mn(2+) as cofactor.

In terms of biological role, CRISPR (clustered regularly interspaced short palindromic repeat), is an adaptive immune system that provides protection against mobile genetic elements (viruses, transposable elements and conjugative plasmids). CRISPR clusters contain spacers, sequences complementary to antecedent mobile elements, and target invading nucleic acids. CRISPR clusters are transcribed and processed into CRISPR RNA (crRNA). Acts as a dsDNA endonuclease. Involved in the integration of spacer DNA into the CRISPR cassette. The chain is CRISPR-associated endonuclease Cas1 1 from Methanospirillum hungatei JF-1 (strain ATCC 27890 / DSM 864 / NBRC 100397 / JF-1).